The sequence spans 928 residues: Protein naked cuticle (928 aa).

Positions 68–80 (IITTPPGNASGAG) are enriched in polar residues. Residues 68 to 133 (IITTPPGNAS…SNGKHGKYSN (66 aa)) form a disordered region. Basic residues predominate over residues 84-101 (QSHHQTNHHSSGRSHPGH). A compositionally biased stretch (polar residues) spans 120–133 (ISSTSNGKHGKYSN). Residues 177 to 253 (EFTCDVSVEG…TVSPEGKSKS (77 aa)) are interaction with dsh. The 37-residue stretch at 188–224 (KSSQPLQFSFTFYDLDGHHGKITKDDIVGIVYTIYES) folds into the EF-hand domain. Residues 227–372 (KSVVVPHCGS…ARYHQKNNSR (146 aa)) form an important for binding to zinc region. Disordered stretches follow at residues 291 to 368 (GVGS…YHQK), 462 to 543 (VGND…KSAE), 578 to 600 (NVSP…QRCN), 614 to 668 (PVAQ…HPQP), and 779 to 825 (LQQK…GSKI). A compositionally biased stretch (basic residues) spans 307-317 (RRQHRYRPRKL). Phosphoserine is present on residues Ser320, Ser327, and Ser329. Over residues 353 to 368 (GKSHHHQSQSARYHQK) the composition is skewed to basic residues. Residues 484 to 493 (QPQSLNHKSA) are compositionally biased toward polar residues. Positions 525–538 (HQHQQQNQQQQQQQ) are enriched in low complexity. Positions 543–572 (ECWKSALNRNDLISIIRESMEKNRLCFQLN) are required for nuclear localization and inhibition of Wnt signaling. 2 stretches are compositionally biased toward low complexity: residues 583 to 598 (RQPA…QRQR) and 624 to 649 (SPPT…GQQH). The span at 650–663 (HPTHPTHPSHHNHH) shows a compositional bias: basic residues. A compositionally biased stretch (basic and acidic residues) spans 802 to 811 (QPKDASRSEQ). Residues 812–822 (RPPTSNSSSAG) show a composition bias toward polar residues.

Belongs to the NKD family. As to quaternary structure, interacts with dsh. This interaction may be stabilized by zinc.

The protein resides in the cell membrane. It localises to the cytoplasm. It is found in the nucleus. Cell autonomous antagonist of the canonical Wnt signaling pathway. May activate a second Wnt signaling pathway that controls planar cell polarity. Required for neuroblast specification. The protein is Protein naked cuticle (nkd) of Drosophila melanogaster (Fruit fly).